Here is a 181-residue protein sequence, read N- to C-terminus: Protein Syd (181 aa).

The protein belongs to the Syd family.

It localises to the cell inner membrane. In terms of biological role, interacts with the SecY protein in vivo. May bind preferentially to an uncomplexed state of SecY, thus functioning either as a chelating agent for excess SecY in the cell or as a regulatory factor that negatively controls the translocase function. This Klebsiella pneumoniae subsp. pneumoniae (strain ATCC 700721 / MGH 78578) protein is Protein Syd.